A 184-amino-acid chain; its full sequence is Late embryogenesis abundant protein (184 aa).

Residues 49–184 form a disordered region; the sequence is TGNIAEYPTE…KLPGHHNHHP (136 aa). Residues 60–86 show a composition bias toward low complexity; the sequence is PPAGVAAGTGAAATTAAGVTTSETTTG. Basic and acidic residues-rich tracts occupy residues 87–98 and 122–138; these read QEHHGSLGEHLR and KDKIKDKLGGGKHKDEQ. Positions 139-159 are enriched in low complexity; that stretch reads TPTTATTTGPTTTTTTTGAAA. The span at 160-177 shows a compositional bias: basic and acidic residues; that stretch reads DQHHEKKGILEKIKEKLP.

It belongs to the plant dehydrin family.

LEA protein are late embryogenesis abundant in higher plant seed embryos. There are two subsets of LEA proteins (5a, and 5b), the first ones are expressed when the cotyledon weight reach 80 mg and the second set are expressed above 100 mg. The function of those proteins is not known. This Raphanus sativus (Radish) protein is Late embryogenesis abundant protein.